A 179-amino-acid chain; its full sequence is Large ribosomal subunit protein uL6c (179 aa).

It belongs to the universal ribosomal protein uL6 family. Part of the 50S ribosomal subunit.

Its subcellular location is the plastid. The protein localises to the chloroplast. In terms of biological role, binds 23S rRNA. This chain is Large ribosomal subunit protein uL6c (rpl6), found in Guillardia theta (Cryptophyte).